Reading from the N-terminus, the 169-residue chain is 4-hydroxylaminobenzoate lyase (169 aa).

Belongs to the PnbB family.

The catalysed reaction is 4-hydroxylaminobenzoate + H2O + H(+) = 3,4-dihydroxybenzoate + NH4(+). In terms of biological role, lyase involved in the degradation of nitroaromatic compounds. Catalyzes the conversion of 4-hydroxylaminobenzoate to 3,4-dihydroxybenzoate (protocatechuate). The sequence is that of 4-hydroxylaminobenzoate lyase from Nocardioides sp. (strain LMS-CY).